The following is a 599-amino-acid chain: Aspartate--tRNA(Asp/Asn) ligase (599 aa).

E180 serves as a coordination point for L-aspartate. The segment at 204–207 (QLLK) is aspartate. R226 contacts L-aspartate. Residues 226-228 (RDE) and Q235 each bind ATP. L-aspartate is bound at residue H457. E491 is an ATP binding site. Position 498 (R498) interacts with L-aspartate. 543 to 546 (GWDR) serves as a coordination point for ATP. Residues 565–599 (KAGGGRDPLTGAPAPISDEQRAETGVDYDPDADEN) form a disordered region. A compositionally biased stretch (acidic residues) spans 590–599 (VDYDPDADEN).

Belongs to the class-II aminoacyl-tRNA synthetase family. Type 1 subfamily. Homodimer.

Its subcellular location is the cytoplasm. The enzyme catalyses tRNA(Asx) + L-aspartate + ATP = L-aspartyl-tRNA(Asx) + AMP + diphosphate. Functionally, aspartyl-tRNA synthetase with relaxed tRNA specificity since it is able to aspartylate not only its cognate tRNA(Asp) but also tRNA(Asn). Reaction proceeds in two steps: L-aspartate is first activated by ATP to form Asp-AMP and then transferred to the acceptor end of tRNA(Asp/Asn). The sequence is that of Aspartate--tRNA(Asp/Asn) ligase from Bifidobacterium longum (strain DJO10A).